A 294-amino-acid chain; its full sequence is Cytidine deaminase (294 aa).

2 CMP/dCMP-type deaminase domains span residues 48–168 and 187–294; these read DDDA…FGPK and ALTD…RITF. 89–91 contributes to the substrate binding site; sequence NME. His-102 contacts Zn(2+). The active-site Proton donor is Glu-104. Residues Cys-129 and Cys-132 each coordinate Zn(2+).

This sequence belongs to the cytidine and deoxycytidylate deaminase family. In terms of assembly, homodimer. Zn(2+) is required as a cofactor.

It catalyses the reaction cytidine + H2O + H(+) = uridine + NH4(+). The enzyme catalyses 2'-deoxycytidine + H2O + H(+) = 2'-deoxyuridine + NH4(+). This enzyme scavenges exogenous and endogenous cytidine and 2'-deoxycytidine for UMP synthesis. This chain is Cytidine deaminase, found in Serratia proteamaculans (strain 568).